The primary structure comprises 513 residues: Noroxomaritidine synthase 2 (513 aa).

Residues His14–Ala34 traverse the membrane as a helical segment. Cys458 serves as a coordination point for heme.

It belongs to the cytochrome P450 family. It depends on heme as a cofactor. In terms of tissue distribution, mostly expressed in stems, and, to a lower extent, in bulbs, roots, leaves and flowers.

It localises to the membrane. The enzyme catalyses 4'-O-methylnorbelladine + reduced [NADPH--hemoprotein reductase] + O2 = (10bR,4aS)-noroxomaritidine + oxidized [NADPH--hemoprotein reductase] + 2 H2O + H(+). It carries out the reaction 4'-O-methylnorbelladine + reduced [NADPH--hemoprotein reductase] + O2 = (10bS,4aR)-noroxomaritidine + oxidized [NADPH--hemoprotein reductase] + 2 H2O + H(+). It functions in the pathway alkaloid biosynthesis. Its function is as follows. Cytochrome P450 that catalyzes an intramolecular para-para' C-C phenol coupling of 4'-O-methylnorbelladine in alkaloids biosynthesis, including haemanthamine- and crinamine-type alkaloids, promising anticancer agents. Catalyzes the formation of (10bR,4aS)-noroxomaritidine and (10bS,4aR)-noroxomaritidine from 4'-O-methylnorbelladine. In Narcissus pseudonarcissus (Daffodil), this protein is Noroxomaritidine synthase 2.